The primary structure comprises 29 residues: Conotoxin pr6a (29 aa).

3 disulfides stabilise this stretch: cysteine 2–cysteine 20, cysteine 9–cysteine 24, and cysteine 19–cysteine 28.

Expressed by the venom duct.

The protein localises to the secreted. Its function is as follows. Intraperitoneal injection into fish (1 nmol) provokes hyperactivity and erratic swimming in various directions after 14 minutes. The polypeptide is Conotoxin pr6a (Conus parius (Cone snail)).